The following is a 147-amino-acid chain: 3-dehydroquinate dehydratase (147 aa).

Catalysis depends on Tyr22, which acts as the Proton acceptor. Substrate contacts are provided by Asn73, His79, and Asp86. His99 functions as the Proton donor in the catalytic mechanism. Residues 100–101 (LS) and Arg110 contribute to the substrate site.

The protein belongs to the type-II 3-dehydroquinase family. In terms of assembly, homododecamer.

It carries out the reaction 3-dehydroquinate = 3-dehydroshikimate + H2O. The protein operates within metabolic intermediate biosynthesis; chorismate biosynthesis; chorismate from D-erythrose 4-phosphate and phosphoenolpyruvate: step 3/7. Catalyzes a trans-dehydration via an enolate intermediate. The chain is 3-dehydroquinate dehydratase from Synechococcus sp. (strain WH7803).